The following is a 1363-amino-acid chain: Vascular endothelial growth factor receptor 3 (1363 aa).

The N-terminal stretch at 1-24 is a signal peptide; it reads MQRGAALCLRLWLCLGLLDGLVSG. Residues 25–775 are Extracellular-facing; sequence YSMTPPTLNI…EGSEDKGSME (751 aa). Ig-like C2-type domains are found at residues 30–127, 151–213, 219–326, 331–415, 422–552, 555–671, and 678–764; these read PTLN…TAAS, KDAM…WGDQ, PFLV…TEVI, PFIS…ISLE, PQIH…FYVT, PDGF…KYLS, and PRLT…ASVA. 6 N-linked (GlcNAc...) asparagine glycosylation sites follow: Asn33, Asn104, Asn166, Asn251, Asn299, and Asn411. 2 disulfides stabilise this stretch: Cys51–Cys111 and Cys158–Cys206. A disulfide bridge links Cys252 with Cys310. 3 cysteine pairs are disulfide-bonded: Cys445-Cys534, Cys466-Cys486, and Cys578-Cys653. Residues Asn515, Asn527, Asn594, Asn683, and Asn690 are each glycosylated (N-linked (GlcNAc...) asparagine). Cysteines 699 and 751 form a disulfide. The N-linked (GlcNAc...) asparagine glycan is linked to Asn758. The helical transmembrane segment at 776 to 796 threads the bilayer; sequence IVILVGTGVIAVFFWVLLLLI. The Cytoplasmic segment spans residues 797-1363; it reads FCNMRRPAHA…RVTFFTDNSY (567 aa). 3 positions are modified to phosphotyrosine; by SRC: Tyr830, Tyr833, and Tyr853. The Protein kinase domain occupies 845–1173; sequence LHLGRVLGYG…ELVEILGDLL (329 aa). ATP-binding positions include 851 to 859 and Lys879; that span reads LGYGAFGKV. Asp1037 serves as the catalytic Proton acceptor. Tyr1063 bears the Phosphotyrosine; by autocatalysis and SRC mark. Tyr1068, Tyr1230, Tyr1231, and Tyr1265 each carry phosphotyrosine; by autocatalysis. Residues 1291 to 1331 are disordered; it reads HRQESGFSCKGPGQNVAVTRAHPDSQGRRRRPERGARGGQV. Phosphotyrosine; by autocatalysis and SRC occurs at positions 1333 and 1337. Tyr1363 carries the post-translational modification Phosphotyrosine; by autocatalysis.

The protein belongs to the protein kinase superfamily. Tyr protein kinase family. CSF-1/PDGF receptor subfamily. Interacts with VEGFC and VEGFD. Monomer in the absence of bound VEGFC or VEGFD. Homodimer in the presence of bound VEGFC or VEGFD. Can also form a heterodimer with KDR. Interacts with PTPN14; the interaction is enhanced by stimulation with VEGFC. Interacts with CRK, GRB2, PTK2/FAK1, SHC1, PIK3R1 and PTPN11/SHP-2. Identified in a complex with SRC and ITGB1. In terms of processing, autophosphorylated on tyrosine residues upon ligand binding. Autophosphorylation occurs in trans, i.e. one subunit of the dimeric receptor phosphorylates tyrosine residues on the other subunit. Phosphorylation in response to H(2)O(2) is mediated by a process that requires SRC and PRKCD activity. Phosphorylation at Tyr-1068 is required for autophosphorylation at additional tyrosine residues. Phosphorylation at Tyr-1063 and Tyr-1337 is important for interaction with CRK and subsequent activation of MAPK8. Phosphorylation at Tyr-1230, Tyr-1231 and Tyr-1337 is important for interaction with GRB2 and subsequent activation of the AKT1 and MAPK1/ERK2 and/or MAPK3/ERK1 signaling pathways. In response to endothelial cell adhesion onto collagen, can also be phosphorylated in the absence of FLT4 kinase activity by SRC at Tyr-830, Tyr-833, Tyr-853, Tyr-1063, Tyr-1333, and Tyr-1337. As to expression, detected in endothelial cells (at protein level). Widely expressed. Detected in fetal spleen, lung and brain. Detected in adult liver, muscle, thymus, placenta, lung, testis, ovary, prostate, heart, and kidney.

The protein resides in the cell membrane. Its subcellular location is the cytoplasm. It is found in the nucleus. It localises to the secreted. It catalyses the reaction L-tyrosyl-[protein] + ATP = O-phospho-L-tyrosyl-[protein] + ADP + H(+). Present in an inactive conformation in the absence of bound ligand. Binding of VEGFC or VEGFD leads to dimerization and activation by autophosphorylation on tyrosine residues. Inhibited by MAZ51. Functionally, tyrosine-protein kinase that acts as a cell-surface receptor for VEGFC and VEGFD, and plays an essential role in adult lymphangiogenesis and in the development of the vascular network and the cardiovascular system during embryonic development. Promotes proliferation, survival and migration of endothelial cells, and regulates angiogenic sprouting. Signaling by activated FLT4 leads to enhanced production of VEGFC, and to a lesser degree VEGFA, thereby creating a positive feedback loop that enhances FLT4 signaling. Modulates KDR signaling by forming heterodimers. The secreted isoform 3 may function as a decoy receptor for VEGFC and/or VEGFD and play an important role as a negative regulator of VEGFC-mediated lymphangiogenesis and angiogenesis. Binding of vascular growth factors to isoform 1 or isoform 2 leads to the activation of several signaling cascades; isoform 2 seems to be less efficient in signal transduction, because it has a truncated C-terminus and therefore lacks several phosphorylation sites. Mediates activation of the MAPK1/ERK2, MAPK3/ERK1 signaling pathway, of MAPK8 and the JUN signaling pathway, and of the AKT1 signaling pathway. Phosphorylates SHC1. Mediates phosphorylation of PIK3R1, the regulatory subunit of phosphatidylinositol 3-kinase. Promotes phosphorylation of MAPK8 at 'Thr-183' and 'Tyr-185', and of AKT1 at 'Ser-473'. This Homo sapiens (Human) protein is Vascular endothelial growth factor receptor 3 (FLT4).